We begin with the raw amino-acid sequence, 446 residues long: Minor teichoic acid biosynthesis protein GgaA (446 aa).

It belongs to the glycosyltransferase 2 family.

It participates in cell wall biogenesis; poly(glucopyranosyl N-acetylgalactosamine 1-phosphate) teichoic acid biosynthesis. Functionally, involved in the biosynthesis of galactosamine-containing minor teichoic acid, a non-essential cell wall polymer in B.subtilis 168. This chain is Minor teichoic acid biosynthesis protein GgaA (ggaA), found in Bacillus subtilis (strain 168).